The chain runs to 563 residues: Tripeptidyl-peptidase 1 (563 aa).

Residues 1 to 19 form the signal peptide; sequence MGLQACLLGLFALILSGKC. Residues 20-195 constitute a propeptide, removed in mature form; that stretch reads SYSPEPDQRR…PEPQVTGTVG (176 aa). C111 and C122 are joined by a disulfide. One can recognise a Peptidase S53 domain in the interval 199–563; that stretch reads GVTPSVIRKR…PALLKTLLNP (365 aa). N-linked (GlcNAc...) asparagine glycans are attached at residues N210 and N222. Residues E272 and D276 each act as charge relay system in the active site. N286, N313, and N443 each carry an N-linked (GlcNAc...) asparagine glycan. 2 cysteine pairs are disulfide-bonded: C365–C526 and C522–C537. The active-site Charge relay system is S475. The Ca(2+) site is built by D517 and V518. Ca(2+) is bound by residues G539, G541, and D543.

In terms of assembly, monomer. Interacts with CLN5. Interacts with CLN3. Requires Ca(2+) as cofactor. In terms of processing, activated by autocatalytic proteolytical processing upon acidification. N-glycosylation is required for processing and activity. Detected in all tissues examined with highest levels in heart and placenta and relatively similar levels in other tissues.

It is found in the lysosome. It localises to the melanosome. It catalyses the reaction Release of an N-terminal tripeptide from a polypeptide, but also has endopeptidase activity.. Its activity is regulated as follows. Inhibited by diisopropyl fluorophosphate (DFP). In terms of biological role, lysosomal serine protease with tripeptidyl-peptidase I activity. May act as a non-specific lysosomal peptidase which generates tripeptides from the breakdown products produced by lysosomal proteinases. Requires substrates with an unsubstituted N-terminus. The protein is Tripeptidyl-peptidase 1 (TPP1) of Homo sapiens (Human).